A 625-amino-acid polypeptide reads, in one-letter code: 1-deoxy-D-xylulose-5-phosphate synthase (625 aa).

Residues His80 and 121-123 (GHS) each bind thiamine diphosphate. Asp152 is a binding site for Mg(2+). Residues 153 to 154 (GA), Asn181, Tyr290, and Glu371 contribute to the thiamine diphosphate site. Asn181 contributes to the Mg(2+) binding site.

The protein belongs to the transketolase family. DXPS subfamily. As to quaternary structure, homodimer. Mg(2+) is required as a cofactor. Thiamine diphosphate serves as cofactor.

It catalyses the reaction D-glyceraldehyde 3-phosphate + pyruvate + H(+) = 1-deoxy-D-xylulose 5-phosphate + CO2. It participates in metabolic intermediate biosynthesis; 1-deoxy-D-xylulose 5-phosphate biosynthesis; 1-deoxy-D-xylulose 5-phosphate from D-glyceraldehyde 3-phosphate and pyruvate: step 1/1. Functionally, catalyzes the acyloin condensation reaction between C atoms 2 and 3 of pyruvate and glyceraldehyde 3-phosphate to yield 1-deoxy-D-xylulose-5-phosphate (DXP). This chain is 1-deoxy-D-xylulose-5-phosphate synthase, found in Haemophilus influenzae (strain 86-028NP).